The following is a 178-amino-acid chain: Large ribosomal subunit protein uL30 (178 aa).

This sequence belongs to the universal ribosomal protein uL30 family. In terms of assembly, part of the 50S ribosomal subunit.

This is Large ribosomal subunit protein uL30 from Pyrobaculum aerophilum (strain ATCC 51768 / DSM 7523 / JCM 9630 / CIP 104966 / NBRC 100827 / IM2).